The primary structure comprises 397 residues: Citrate synthase (397 aa).

Active-site residues include histidine 266 and aspartate 320.

The protein belongs to the citrate synthase family.

It catalyses the reaction oxaloacetate + acetyl-CoA + H2O = citrate + CoA + H(+). It participates in carbohydrate metabolism; tricarboxylic acid cycle; isocitrate from oxaloacetate: step 1/2. The polypeptide is Citrate synthase (gltA) (Synechocystis sp. (strain ATCC 27184 / PCC 6803 / Kazusa)).